An 86-amino-acid polypeptide reads, in one-letter code: Anti-adapter protein IraP (86 aa).

Residues 1–36 (MKNLIAELLFKLAQKEEESKELCAQVEALEIIVTAM) are a coiled coil.

This sequence belongs to the IraP family. As to quaternary structure, interacts with RssB.

The protein resides in the cytoplasm. Functionally, inhibits RpoS proteolysis by regulating RssB activity, thereby increasing the stability of the sigma stress factor RpoS especially during phosphate starvation, but also in stationary phase and during nitrogen starvation. Its effect on RpoS stability is due to its interaction with RssB, which probably blocks the interaction of RssB with RpoS, and the consequent delivery of the RssB-RpoS complex to the ClpXP protein degradation pathway. The protein is Anti-adapter protein IraP of Shigella sonnei (strain Ss046).